Reading from the N-terminus, the 228-residue chain is Leucine rich adaptor protein 1-like (228 aa).

The residue at position 1 (methionine 1) is an N-acetylmethionine. The tract at residues 1–89 is disordered; the sequence is MEDSPLPDLR…GSPRGSHSSA (89 aa). 2 stretches are compositionally biased toward basic and acidic residues: residues 8-21 and 28-42; these read DLRD…RKVP and LRGE…DRDP. The segment covering 44–56 has biased composition (gly residues); the sequence is GGSGGGGGGGGGC. Residues 57 to 88 are compositionally biased toward low complexity; sequence SSSSSYCSFPPSLSSSSSSSPTSGSPRGSHSS.

This Homo sapiens (Human) protein is Leucine rich adaptor protein 1-like (LURAP1L).